Consider the following 302-residue polypeptide: GTPase Era (302 aa).

Positions 9–177 constitute an Era-type G domain; the sequence is YCGFIAIVGR…EKIVRQSLRE (169 aa). Residues 17–24 form a G1 region; sequence GRPNVGKS. 17-24 is a GTP binding site; the sequence is GRPNVGKS. The G2 stretch occupies residues 43 to 47; sequence QTTRH. The G3 stretch occupies residues 64–67; it reads DTPG. Residues 64–68 and 126–129 each bind GTP; these read DTPGL and NKVD. The tract at residues 126–129 is G4; it reads NKVD. The segment at 156-158 is G5; the sequence is ISA. The region spanning 208-285 is the KH type-2 domain; the sequence is TGEELPYSVT…HLELWVKVKS (78 aa).

The protein belongs to the TRAFAC class TrmE-Era-EngA-EngB-Septin-like GTPase superfamily. Era GTPase family. In terms of assembly, monomer.

It is found in the cytoplasm. The protein localises to the cell inner membrane. An essential GTPase that binds both GDP and GTP, with rapid nucleotide exchange. Plays a role in 16S rRNA processing and 30S ribosomal subunit biogenesis and possibly also in cell cycle regulation and energy metabolism. This is GTPase Era from Haemophilus influenzae (strain PittGG).